We begin with the raw amino-acid sequence, 292 residues long: Transcription antiterminator LacT (292 aa).

PRD domains are found at residues 66-170 (NIPI…DDGE) and 172-284 (VFGK…APAQ).

The protein belongs to the transcriptional antiterminator BglG family.

Mediates positive regulation of the lac operon by functioning as an antiterminator factor of transcription. In Lacticaseibacillus casei (Lactobacillus casei), this protein is Transcription antiterminator LacT (lacT).